The sequence spans 160 residues: uncharacterized protein (160 aa).

Residues 137-157 form a helical membrane-spanning segment; that stretch reads YNILFVVVILLLLFVAWRCYV.

The protein resides in the host membrane. It localises to the virion. This is an uncharacterized protein from Acanthamoeba polyphaga mimivirus (APMV).